A 520-amino-acid polypeptide reads, in one-letter code: Cytochrome P450 monooxygenase 98 (520 aa).

Residues 7–27 (MLNNNLLIVIGTFAVCVYIVL) form a helical membrane-spanning segment. Cys-445 is a binding site for heme.

The protein belongs to the cytochrome P450 family. Heme is required as a cofactor.

Its subcellular location is the membrane. It functions in the pathway secondary metabolite biosynthesis. Functionally, cytochrome P450 monooxygenase that is able to use pyrene, phenanthrene, 3,5-dimethoxy-trans-stilbene and 3,5,4'-trimethoxy-trans-stilbene as substrates for oxidation. The polypeptide is Cytochrome P450 monooxygenase 98 (Postia placenta (strain ATCC 44394 / Madison 698-R) (Brown rot fungus)).